The primary structure comprises 181 residues: ATP synthase subunit delta (181 aa).

The protein belongs to the ATPase delta chain family. In terms of assembly, F-type ATPases have 2 components, F(1) - the catalytic core - and F(0) - the membrane proton channel. F(1) has five subunits: alpha(3), beta(3), gamma(1), delta(1), epsilon(1). F(0) has three main subunits: a(1), b(2) and c(10-14). The alpha and beta chains form an alternating ring which encloses part of the gamma chain. F(1) is attached to F(0) by a central stalk formed by the gamma and epsilon chains, while a peripheral stalk is formed by the delta and b chains.

The protein resides in the cell membrane. In terms of biological role, f(1)F(0) ATP synthase produces ATP from ADP in the presence of a proton or sodium gradient. F-type ATPases consist of two structural domains, F(1) containing the extramembraneous catalytic core and F(0) containing the membrane proton channel, linked together by a central stalk and a peripheral stalk. During catalysis, ATP synthesis in the catalytic domain of F(1) is coupled via a rotary mechanism of the central stalk subunits to proton translocation. This protein is part of the stalk that links CF(0) to CF(1). It either transmits conformational changes from CF(0) to CF(1) or is implicated in proton conduction. This is ATP synthase subunit delta from Lacticaseibacillus casei (strain BL23) (Lactobacillus casei).